Consider the following 123-residue polypeptide: rRNA-processing protein cgr-1 (123 aa).

Low complexity predominate over residues 1–13; the sequence is MSSTTTTTQTTSQ. Disordered stretches follow at residues 1–47 and 85–123; these read MSST…GLTS and EKRA…LINS. Positions 49 to 110 form a coiled coil; that stretch reads EKRAKERQLL…EKMHKKRVER (62 aa). Residues 85–102 are compositionally biased toward basic and acidic residues; it reads EKRAKKEEKERYEKMAEK. Over residues 103 to 123 the composition is skewed to basic residues; that stretch reads MHKKRVERLKRKEKRNKLINS.

Belongs to the CGR1 family.

The protein resides in the nucleus. It localises to the nucleolus. Involved in nucleolar integrity and required for processing of the pre-rRNA for the 60S ribosome subunit. The polypeptide is rRNA-processing protein cgr-1 (cgr-1) (Neurospora crassa (strain ATCC 24698 / 74-OR23-1A / CBS 708.71 / DSM 1257 / FGSC 987)).